The primary structure comprises 82 residues: Endocuticle structural protein SgAbd-6 (82 aa).

The residue at position 1 (Gln-1) is a Pyrrolidone carboxylic acid. Positions 18–82 (LGQYTFGFKT…ENGFQPQYTQ (65 aa)) constitute a Chitin-binding type R&amp;R domain.

In terms of biological role, component of the abdominal endocuticle. The sequence is that of Endocuticle structural protein SgAbd-6 from Schistocerca gregaria (Desert locust).